Consider the following 660-residue polypeptide: Kinesin-like protein KIF22 (660 aa).

Residues 1–31 (MSLRAKTCPQRREMASATSGPGRCVSKGGLG) form a disordered region. The 326-residue stretch at 38–363 (RVRVAVRLRP…LNFTARSKEV (326 aa)) folds into the Kinesin motor domain. Position 122-129 (122-129 (GPTGAGKT)) interacts with ATP. Positions 391-418 (PSEAKKAKGPEEESTGSPESTAAPASAS) are disordered. Over residues 405 to 418 (TGSPESTAAPASAS) the composition is skewed to low complexity. Phosphoserine occurs at positions 407, 422, and 447. K460 participates in a covalent cross-link: Glycyl lysine isopeptide (Lys-Gly) (interchain with G-Cter in SUMO2). Positions 460–505 (KRERMVLMKTVEEKNLEIERLKMKQKELEAKVLAQEAPDPREKENT) form a coiled coil. 2 disordered regions span residues 493–516 (AQEA…ASYS) and 534–567 (IQKQ…VEKD). Residues 505 to 516 (TPTILQPPASYS) are compositionally biased toward polar residues. Residues S540 and S576 each carry the phosphoserine modification.

Belongs to the TRAFAC class myosin-kinesin ATPase superfamily. Kinesin family. Interacts with FAM83D and SIAH1. Post-translationally, ubiquitinated; mediated by SIAH1 and leading to its subsequent proteasomal degradation.

It is found in the nucleus. The protein localises to the cytoplasm. Its subcellular location is the cytoskeleton. In terms of biological role, kinesin family member that is involved in spindle formation and the movements of chromosomes during mitosis and meiosis. Binds to microtubules and to DNA. Plays a role in congression of laterally attached chromosomes in NDC80-depleted cells. This is Kinesin-like protein KIF22 (Kif22) from Mus musculus (Mouse).